We begin with the raw amino-acid sequence, 286 residues long: Sulfate transport system permease protein CysW (286 aa).

6 helical membrane passes run 20–40, 74–94, 108–128, 145–165, 207–227, and 255–275; these read LLPLALIGISLLYVGLIIIIP, LMGVISVPLNTLFGLAAAFAI, VIDLPFSISPVVAGLMIVLLY, IIFAWPGMALATIFVSMPFVA, LYGVVLTTARALGEFGAVSVV, and YTAALLLGGISLVTLVLKALL. An ABC transmembrane type-1 domain is found at 69-272; it reads IRLTLLMGVI…GISLVTLVLK (204 aa).

This sequence belongs to the binding-protein-dependent transport system permease family. CysTW subfamily. As to quaternary structure, the complex is composed of two ATP-binding proteins (CysA), two transmembrane proteins (CysT and CysW) and a solute-binding protein (CysP).

The protein resides in the cell inner membrane. In terms of biological role, part of the ABC transporter complex CysAWTP (TC 3.A.1.6.1) involved in sulfate/thiosulfate import. Probably responsible for the translocation of the substrate across the membrane. This is Sulfate transport system permease protein CysW (cysW) from Synechococcus elongatus (strain ATCC 33912 / PCC 7942 / FACHB-805) (Anacystis nidulans R2).